The primary structure comprises 341 residues: Anthranilate phosphoribosyltransferase (341 aa).

Residues Gly79, 82-83 (GD), Thr87, 89-92 (NIST), 107-115 (KHGNRAASS), and Ala119 contribute to the 5-phospho-alpha-D-ribose 1-diphosphate site. Position 79 (Gly79) interacts with anthranilate. Position 91 (Ser91) interacts with Mg(2+). Anthranilate is bound at residue Asn110. Arg165 provides a ligand contact to anthranilate. 2 residues coordinate Mg(2+): Asp224 and Glu225.

Belongs to the anthranilate phosphoribosyltransferase family. Homodimer. Requires Mg(2+) as cofactor.

The enzyme catalyses N-(5-phospho-beta-D-ribosyl)anthranilate + diphosphate = 5-phospho-alpha-D-ribose 1-diphosphate + anthranilate. Its pathway is amino-acid biosynthesis; L-tryptophan biosynthesis; L-tryptophan from chorismate: step 2/5. Catalyzes the transfer of the phosphoribosyl group of 5-phosphorylribose-1-pyrophosphate (PRPP) to anthranilate to yield N-(5'-phosphoribosyl)-anthranilate (PRA). The polypeptide is Anthranilate phosphoribosyltransferase (Lacticaseibacillus casei (strain BL23) (Lactobacillus casei)).